The sequence spans 793 residues: Spindle and centriole-associated protein 1 (793 aa).

Residues 1–29 (MSYLRASRTSSNLSLAKKPSKTRKKLQAR) are disordered. The span at 18-27 (KPSKTRKKLQ) shows a compositional bias: basic residues. Residues 312-405 (SLGLLNSMIM…LTAEILSLKE (94 aa)) are a coiled coil. The segment at 519–542 (KTVGNLSSHSAVPKRAANRLPSPP) is disordered. The stretch at 622–712 (LQNEDLVSQM…LLKLIEQQKQ (91 aa)) forms a coiled coil. A compositionally biased stretch (polar residues) spans 718-739 (PTLSPITPQGRRTGSSLDTTPL). The segment at 718 to 783 (PTLSPITPQG…RSQAANDRGE (66 aa)) is disordered. Over residues 740–753 (SSCSTSGRRSSGAS) the composition is skewed to low complexity. The span at 754-778 (NKSESISTSVGSLRSASTGRRSQAA) shows a compositional bias: polar residues.

Its subcellular location is the cytoplasm. It localises to the cytoskeleton. The protein resides in the microtubule organizing center. It is found in the centrosome. The protein localises to the centriole. Its subcellular location is the spindle. Functionally, regulator required for centriole duplication. The protein is Spindle and centriole-associated protein 1 (spice1) of Xenopus laevis (African clawed frog).